A 310-amino-acid polypeptide reads, in one-letter code: HPr kinase/phosphorylase (310 aa).

Catalysis depends on residues His138 and Lys159. An ATP-binding site is contributed by 153–160 (GASGIGKS). Ser160 lines the Mg(2+) pocket. Asp177 acts as the Proton acceptor; for phosphorylation activity. Proton donor; for dephosphorylation activity in catalysis. Residues 201-210 (IEIRGVGIID) form an important for the catalytic mechanism of both phosphorylation and dephosphorylation region. Glu202 is a binding site for Mg(2+). Residue Arg243 is part of the active site. The interval 264–269 (PVKTGR) is important for the catalytic mechanism of dephosphorylation.

This sequence belongs to the HPrK/P family. As to quaternary structure, homohexamer. Requires Mg(2+) as cofactor.

The catalysed reaction is [HPr protein]-L-serine + ATP = [HPr protein]-O-phospho-L-serine + ADP + H(+). It catalyses the reaction [HPr protein]-O-phospho-L-serine + phosphate + H(+) = [HPr protein]-L-serine + diphosphate. Functionally, catalyzes the ATP- as well as the pyrophosphate-dependent phosphorylation of a specific serine residue in HPr, a phosphocarrier protein of the phosphoenolpyruvate-dependent sugar phosphotransferase system (PTS). HprK/P also catalyzes the pyrophosphate-producing, inorganic phosphate-dependent dephosphorylation (phosphorolysis) of seryl-phosphorylated HPr (P-Ser-HPr). The two antagonistic activities of HprK/P are regulated by several intracellular metabolites, which change their concentration in response to the absence or presence of rapidly metabolisable carbon sources (glucose, fructose, etc.) in the growth medium. Therefore, by controlling the phosphorylation state of HPr, HPrK/P is a sensor enzyme that plays a major role in the regulation of carbon metabolism and sugar transport: it mediates carbon catabolite repression (CCR), and regulates PTS-catalyzed carbohydrate uptake and inducer exclusion. The polypeptide is HPr kinase/phosphorylase (Lactococcus lactis subsp. cremoris (strain MG1363)).